Here is a 1028-residue protein sequence, read N- to C-terminus: Kinesin-like protein KIF28 (1028 aa).

The region spanning Ser-11–Val-358 is the Kinesin motor domain. Gly-114–Ser-121 provides a ligand contact to ATP. Positions Cys-460–Gly-523 constitute an FHA domain. The stretch at Asn-873–Glu-902 forms a coiled coil.

This sequence belongs to the TRAFAC class myosin-kinesin ATPase superfamily. Kinesin family.

The protein resides in the mitochondrion membrane. Functionally, microtubule-dependent motor protein required for mitochondrion morphology and transport of mitochondria in neuronal cells. The chain is Kinesin-like protein KIF28 from Mus musculus (Mouse).